The primary structure comprises 625 residues: Exonuclease mut-7 homolog (625 aa).

At S17 the chain carries Phosphoserine. In terms of domain architecture, 3'-5' exonuclease spans 410–602 (LIIVNKADEF…IYNTLIERVS (193 aa)).

This sequence belongs to the mut-7 family. In terms of assembly, interacts with AGO1; the interaction is not RNA dependent. The cofactor is Mg(2+).

In terms of biological role, possesses 3'-5' exoribonuclease activity. Required for 3'-end trimming of AGO1-bound miRNAs, in particular multiple-isoform miRNAs, which represents a critical step in miRNA maturation. This chain is Exonuclease mut-7 homolog (Nbr), found in Drosophila melanogaster (Fruit fly).